A 435-amino-acid chain; its full sequence is Large ribosomal subunit protein mL65 (435 aa).

The protein belongs to the mitochondrion-specific ribosomal protein mL65 family. In terms of assembly, component of the mitochondrial ribosome small subunit (28S) which comprises a 12S rRNA and about 30 distinct proteins.

It localises to the mitochondrion. This Bos taurus (Bovine) protein is Large ribosomal subunit protein mL65 (MRPS30).